Here is a 118-residue protein sequence, read N- to C-terminus: Ferredoxin-thioredoxin reductase, catalytic chain (118 aa).

[4Fe-4S] cluster is bound at residue cysteine 57. Cysteine 59 (nucleophile) is an active-site residue. Cysteine 59 and cysteine 89 are oxidised to a cystine. [4Fe-4S] cluster is bound by residues cysteine 76, cysteine 78, and cysteine 87.

It belongs to the ferredoxin thioredoxin reductase beta subunit family. As to quaternary structure, heterodimer of subunit A (variable subunit) and subunit B (catalytic subunit). Heterodimeric FTR forms a complex with ferredoxin and thioredoxin. [4Fe-4S] cluster is required as a cofactor.

Its subcellular location is the plastid. The protein resides in the chloroplast. The enzyme catalyses [thioredoxin]-disulfide + 2 reduced [2Fe-2S]-[ferredoxin] + 2 H(+) = [thioredoxin]-dithiol + 2 oxidized [2Fe-2S]-[ferredoxin]. Catalytic subunit of the ferredoxin-thioredoxin reductase (FTR), which catalyzes the two-electron reduction of thioredoxins by the electrons provided by reduced ferredoxin. This chain is Ferredoxin-thioredoxin reductase, catalytic chain (ftrB), found in Porphyra purpurea (Red seaweed).